The chain runs to 324 residues: MARRGKKKGRPISGWVIFDKPKGMGSTEAVSKIKWLFSAEKAGHAGTLDPLASGMLPIALGEATKTVPYAMDGTKVYRFTVTWGEERSTDDLEGQPTKTSDKRPSREEVEALLPDYTGVISQVPPQFSAIKIDGERAYDLAREGETVEIPAREVEIDRLEIVGFPDADRTEFEVECSKGTYVRSLARDMGRDLGCYGHISDLRRVEVAPFTDEDMVTLAKLEAVWPPLPPKDEDGNVIEPAPRRDFSALDALVIDTGAALDCLPQVPLSDDQAQRVRLGNPVILRGRDAPLEADEACVTTRGKLLAIGYIEHGQFKPKRVFTAG.

D49 (nucleophile) is an active-site residue. The segment at 87-107 (RSTDDLEGQPTKTSDKRPSRE) is disordered.

It belongs to the pseudouridine synthase TruB family. Type 1 subfamily.

The enzyme catalyses uridine(55) in tRNA = pseudouridine(55) in tRNA. Functionally, responsible for synthesis of pseudouridine from uracil-55 in the psi GC loop of transfer RNAs. The protein is tRNA pseudouridine synthase B of Brucella melitensis biotype 1 (strain ATCC 23456 / CCUG 17765 / NCTC 10094 / 16M).